The primary structure comprises 71 residues: Guanine nucleotide-binding protein G(I)/G(S)/G(O) subunit gamma-2 (71 aa).

Ala2 bears the N-acetylalanine mark. The residue at position 68 (Cys68) is a Cysteine methyl ester. Residue Cys68 is the site of S-geranylgeranyl cysteine attachment. Positions Ala69–Leu71 are cleaved as a propeptide — removed in mature form.

It belongs to the G protein gamma family. As to quaternary structure, g proteins are composed of 3 units, alpha, beta and gamma. In this context, interacts with GNB2. The heterodimer formed by GNB1 and GNG2 interacts with ARHGEF5. The heterodimer formed by GNB1 and GNG2 interacts with GRK2. Component of the TAS2R14-GNAI1 complex, consisting of TAS2R14, GNAI1, GNB1 and GNG2. Forms complexes with TAS2R14 and G-proteins; these complexes play a role in the perception of bitterness. Component of the TAS2R14-GNAT3 complex, consisting of TAS2R14, GNAT3, GNB1 and GNG2. Component of the TAS2R14-GNAS2 complex, consisting of TAS2R14, GNAS2, GNB1 and GNG2. In terms of tissue distribution, adrenal gland and brain.

It is found in the cell membrane. Guanine nucleotide-binding proteins (G proteins) are involved as a modulator or transducer in various transmembrane signaling systems. The beta and gamma chains are required for the GTPase activity, for replacement of GDP by GTP, and for G protein-effector interaction. In Bos taurus (Bovine), this protein is Guanine nucleotide-binding protein G(I)/G(S)/G(O) subunit gamma-2 (GNG2).